Reading from the N-terminus, the 399-residue chain is Leu/Ile/Val-binding protein homolog 7 (399 aa).

Residues 1-22 (MEKHLIALSVAALQAGAAPASA) form the signal peptide.

The protein belongs to the leucine-binding protein family.

Component of an amino-acid transport system. In Brucella abortus (strain 2308), this protein is Leu/Ile/Val-binding protein homolog 7.